A 460-amino-acid polypeptide reads, in one-letter code: MKVLSALCVLLVSVATAKQQLSEVEYRNAFTNWMIAHQRHYSSEEFNGRYNIFKANMDYVNEWNTKGSETVLGLNVFADISNEEYRATYLGTPFDASSLEMTESDKIFDASAQVDWRTQGAVTPIKNQGQCGGCWSFSTTGATEGAQYLANGKKNLVSLSEQNLIDCSGSYGNNGCEGGLMTLAFEYIINNKGIDTESSYPYTAEDGKKCKFNPKNVAAQLSSYVNVTSGSESDLAAKVTQGPTSVAIDASNQSFQLYVSGIYNEPACSSTQLDHGVLAVGFGTGSGSSGSHGGSQSQSAGSDSQSAGSESSQSESGSQSQSESGSQSQSQSGSQSFSGSLYSGSYSGSQSGSQSGNSGAAVKQTGAGSGSGSGSGSGSGSGSGSVSGSASGSASGSASGSSSGSNSNGGVYPTAGDYWIVKNSWGTSWGMDGYILMTKGNNNQCGIATMASRPTAVASL.

An N-terminal signal peptide occupies residues 1–17; it reads MKVLSALCVLLVSVATA. Positions 18 to 111 are cleaved as a propeptide — activation peptide; the sequence is KQQLSEVEYR…TESDKIFDAS (94 aa). 2 disulfides stabilise this stretch: C131/C176 and C167/C210. Residue C134 is part of the active site. 2 N-linked (GlcNAc...) asparagine glycosylation sites follow: N226 and N252. An intrachain disulfide couples C268 to C445. Residue H275 is part of the active site. Residues 285–409 are disordered; it reads GSGSSGSHGG…GSSSGSNSNG (125 aa). Residues 294–359 show a composition bias toward low complexity; the sequence is GSQSQSAGSD…QSGSQSGNSG (66 aa). Residues 367 to 385 show a composition bias toward gly residues; it reads AGSGSGSGSGSGSGSGSGS. Low complexity predominate over residues 386–409; the sequence is VSGSASGSASGSASGSSSGSNSNG. Residue N423 is part of the active site.

This sequence belongs to the peptidase C1 family. Glycosylated; contains GlcNAc-alpha-1-P-Ser residues. Also N-glycosylated.

The protein resides in the lysosome. This is Cysteine proteinase 7 (cprG) from Dictyostelium discoideum (Social amoeba).